We begin with the raw amino-acid sequence, 320 residues long: Probable cell division protein WhiA (320 aa).

The H-T-H motif DNA-binding region spans 276–310 (TLKELGEMVESGKVSKSGVNHRLRKIDELAEKLRA).

The protein belongs to the WhiA family.

Involved in cell division and chromosome segregation. The chain is Probable cell division protein WhiA from Halalkalibacterium halodurans (strain ATCC BAA-125 / DSM 18197 / FERM 7344 / JCM 9153 / C-125) (Bacillus halodurans).